The sequence spans 44 residues: Photosystem I reaction center subunit IX (44 aa).

The helical transmembrane segment at 7–27 (YLSTAPVLTTLWFGSLAGLLI) threads the bilayer.

The protein belongs to the PsaJ family.

The protein localises to the plastid. It is found in the chloroplast thylakoid membrane. Functionally, may help in the organization of the PsaE and PsaF subunits. This chain is Photosystem I reaction center subunit IX, found in Phalaenopsis aphrodite subsp. formosana (Moth orchid).